We begin with the raw amino-acid sequence, 800 residues long: Protein PET111, mitochondrial (800 aa).

This sequence to yeast YHR160C.

The protein resides in the mitochondrion matrix. In terms of biological role, required for translation of the mitochondrial gene for cytochrome c oxidase subunit II (COX2). The sequence is that of Protein PET111, mitochondrial (PET111) from Saccharomyces cerevisiae (strain ATCC 204508 / S288c) (Baker's yeast).